The sequence spans 85 residues: U4-theraphotoxin-Hhn1a (85 aa).

The N-terminal stretch at Met-1 to Ala-22 is a signal peptide. Residues Glu-23–Arg-48 constitute a propeptide that is removed on maturation. Disulfide bonds link Cys-52-Cys-66, Cys-56-Cys-77, and Cys-71-Cys-82.

The protein belongs to the neurotoxin 12 (Hwtx-2) family. 02 (Hwtx-2) subfamily. In terms of assembly, monomer. As to expression, expressed by the venom gland.

It is found in the secreted. Its function is as follows. Neurotoxin active on both insects and mammals. This Cyriopagopus hainanus (Chinese bird spider) protein is U4-theraphotoxin-Hhn1a.